A 285-amino-acid chain; its full sequence is RNA 5'-monophosphate methyltransferase (285 aa).

The disordered stretch occupies residues 1 to 28 (MAATQELSKGGVEEAVEEDDPAALKPGA). Residues Arg-46, Asn-77, Asp-111, 136–137 (DI), and Met-165 each bind S-adenosyl-L-methionine. The region spanning 53 to 275 (ELLRQLFPPE…KHTEETQAIP (223 aa)) is the Bin3-type SAM domain.

Belongs to the methyltransferase superfamily. Interacts with DICER1; the interaction may be mediated by RNA.

The protein resides in the cytoplasm. The enzyme catalyses a 5'-end 5'-phospho-ribonucleoside-RNA + S-adenosyl-L-methionine = a 5'-end (5'-methylphospho)-ribonucleoside-RNA + S-adenosyl-L-homocysteine. It catalyses the reaction a 5'-end 5'-phospho-ribonucleoside-RNA + 2 S-adenosyl-L-methionine = a 5'-end (5'-bismethylphospho)-ribonucleoside-RNA + 2 S-adenosyl-L-homocysteine. Functionally, O-methyltransferase that specifically monomethylates 5'-monophosphate of cytoplasmic histidyl tRNA (tRNA(His)), acting as a capping enzyme by protecting tRNA(His) from cleavage by DICER1. Also able, with less efficiently, to methylate the 5' monophosphate of a subset of pre-miRNAs, acting as a negative regulator of miRNA processing. The 5' monophosphate of pre-miRNAs is recognized by DICER1 and is required for pre-miRNAs processing: methylation at this position reduces the processing of pre-miRNAs by DICER1. Was also reported to mediate dimethylation of pre-miR-145; however dimethylation cannot be reproduced by another group which observes a monomethylation of pre-miR-145. This chain is RNA 5'-monophosphate methyltransferase, found in Rattus norvegicus (Rat).